We begin with the raw amino-acid sequence, 480 residues long: Acetyl-coenzyme A carboxylase carboxyl transferase subunit beta, chloroplastic (480 aa).

Residues 25-48 (TSSLGPIENASESKDPNINDTDKN) are disordered. Residues 35–47 (SESKDPNINDTDK) are compositionally biased toward basic and acidic residues. Positions 216-480 (LWVQCENCYG…LHTFFPLNQN (265 aa)) constitute a CoA carboxyltransferase N-terminal domain. Zn(2+) contacts are provided by Cys-220, Cys-223, Cys-239, and Cys-242. The C4-type zinc-finger motif lies at 220-242 (CENCYGLNYKKFFKSKMNLCEQC).

The protein belongs to the AccD/PCCB family. In terms of assembly, acetyl-CoA carboxylase is a heterohexamer composed of biotin carboxyl carrier protein, biotin carboxylase and 2 subunits each of ACCase subunit alpha and ACCase plastid-coded subunit beta (accD). Zn(2+) serves as cofactor.

The protein resides in the plastid. It localises to the chloroplast stroma. It catalyses the reaction N(6)-carboxybiotinyl-L-lysyl-[protein] + acetyl-CoA = N(6)-biotinyl-L-lysyl-[protein] + malonyl-CoA. The protein operates within lipid metabolism; malonyl-CoA biosynthesis; malonyl-CoA from acetyl-CoA: step 1/1. In terms of biological role, component of the acetyl coenzyme A carboxylase (ACC) complex. Biotin carboxylase (BC) catalyzes the carboxylation of biotin on its carrier protein (BCCP) and then the CO(2) group is transferred by the transcarboxylase to acetyl-CoA to form malonyl-CoA. This is Acetyl-coenzyme A carboxylase carboxyl transferase subunit beta, chloroplastic from Helianthus annuus (Common sunflower).